Reading from the N-terminus, the 347-residue chain is Glutamyl-Q tRNA(Asp) synthetase (347 aa).

Residues Arg-31–Ser-35 and Glu-67 contribute to the L-glutamate site. The 'HIGH' region motif lies at Pro-34–Asn-44. Residues Cys-121, Cys-123, Tyr-143, and Cys-147 each contribute to the Zn(2+) site. L-glutamate contacts are provided by Tyr-203 and Arg-221. The short motif at Arg-259 to Ser-263 is the 'KMSKS' region element. Lys-262 serves as a coordination point for ATP.

Belongs to the class-I aminoacyl-tRNA synthetase family. GluQ subfamily. Zn(2+) serves as cofactor.

Its function is as follows. Catalyzes the tRNA-independent activation of glutamate in presence of ATP and the subsequent transfer of glutamate onto a tRNA(Asp). Glutamate is transferred on the 2-amino-5-(4,5-dihydroxy-2-cyclopenten-1-yl) moiety of the queuosine in the wobble position of the QUC anticodon. The sequence is that of Glutamyl-Q tRNA(Asp) synthetase from Cutibacterium acnes (strain DSM 16379 / KPA171202) (Propionibacterium acnes).